A 408-amino-acid polypeptide reads, in one-letter code: Pleckstrin homology domain-containing family O member 1 (408 aa).

The tract at residues 1 to 21 (MKKSGSGKRGPPDGNHQSAAP) is disordered. Residues 20 to 131 (APEKVGWVRK…WINALSSAIT (112 aa)) enclose the PH domain. The tract at residues 132 to 192 (RAKNRILDEV…MLTLDLIQEE (61 aa)) is interaction with capping proteins (CPs). The interval 135–307 (NRILDEVTVE…PAQPGQLSRI (173 aa)) is interaction with ATM, CKIP, IFP35 and NMI. Residues 217-264 (LAGSRRRADSDRIQPSSQRASSLSRPWEKPDKGAPYTPQALKKFPSTE) form a disordered region. Ser226 is modified (phosphoserine). Residues 229-240 (IQPSSQRASSLS) are compositionally biased toward polar residues. 2 positions are modified to phosphoserine: Ser270 and Ser341. Residues 307-408 (IQDLVARKLE…QHSQYRKSLM (102 aa)) are negative regulator of AP-1 activity. 2 disordered regions span residues 325–348 (VQGLGDGKRKAKDPPQSPPDSESE) and 389–408 (TPDSHLRQTSQHSQYRKSLM). Over residues 389–401 (TPDSHLRQTSQHS) the composition is skewed to polar residues.

As to quaternary structure, heterodimer or homodimer. Interacts with CK2 and actin capping subunits (capping protein CP-alpha and CP-beta). CKIP1 and CK2 together inhibit the activity of actin capping protein at the barbed ends of actin filaments. Interacts with ATM, IFP35, JUN, JUND, NMI and PI3K. Interacts with AKT1, AKT2 and AKT3 (each isozyme of PKB), PtdIns(3,5)P2, PtdIns(4,5)P2 and PtdIns(3,4,5)P2. Post-translationally, C-terminal fragments could be released during apoptosis via caspase-3-dependent cleavage.

It is found in the cell membrane. It localises to the nucleus. The protein resides in the cytoplasm. Its function is as follows. Plays a role in the regulation of the actin cytoskeleton through its interactions with actin capping protein (CP). May function to target CK2 to the plasma membrane thereby serving as an adapter to facilitate the phosphorylation of CP by protein kinase 2 (CK2). Appears to target ATM to the plasma membrane. Appears to also inhibit tumor cell growth by inhibiting AKT-mediated cell-survival. Also implicated in PI3K-regulated muscle differentiation, the regulation of AP-1 activity (plasma membrane bound AP-1 regulator that translocates to the nucleus) and the promotion of apoptosis induced by tumor necrosis factor TNF. When bound to PKB, it inhibits it probably by decreasing PKB level of phosphorylation. This chain is Pleckstrin homology domain-containing family O member 1 (Plekho1), found in Mus musculus (Mouse).